The chain runs to 487 residues: Serine/threonine-protein kinase 4 (487 aa).

At M1 the chain carries N-acetylmethionine. At T3 the chain carries Phosphothreonine. The 252-residue stretch at 30–281 (FDVLEKLGEG…ATQLLQHPFV (252 aa)) folds into the Protein kinase domain. ATP is bound by residues 36-44 (LGEGSYGSV) and K59. D149 acts as the Proton acceptor in catalysis. T183 carries the phosphothreonine; by autocatalysis modification. S265 carries the phosphoserine modification. Positions 290–310 (LRDLINEAMDVKLKRQEAQQR) form a coiled coil. The segment at 305–337 (QEAQQREVDQDDEENSEEDELDSGTMVRAVGDE) is disordered. The segment covering 313 to 326 (DQDDEENSEEDELD) has biased composition (acidic residues). The residue at position 320 (S320) is a Phosphoserine. 2 positions are modified to phosphothreonine: T340 and T367. A Phosphothreonine; by PKB/AKT1 modification is found at T387. Phosphoserine occurs at positions 410 and 414. Y433 bears the Phosphotyrosine mark. The region spanning 433 to 480 (YEFLKSWTVEDLQKRLLALDPMMEQEIEEIRQKYQSKRQPILDAIEAK) is the SARAH domain.

Belongs to the protein kinase superfamily. STE Ser/Thr protein kinase family. STE20 subfamily. Homodimer; mediated via the coiled-coil region. Interacts with NORE1, which inhibits autoactivation. Interacts with and stabilizes SAV1. Interacts with RASSF1. Interacts with FOXO3. Interacts with RASSF2 (via SARAH domain). Interacts with AR, PKB/AKT1, TNNI3 and SIRT1. Interacts with DLG5 (via PDZ domain 3). Interacts with MARK3 and SCRIB in the presence of DLG5. The cofactor is Mg(2+). Post-translationally, autophosphorylated on serine and threonine residues. Phosphorylation at Thr-387 by PKB/AKT1, leads to inhibition of its: kinase activity, nuclear translocation and autophosphorylation at Thr-183. It also diminishes its cleavage by caspases and its ability to phosphorylate FOXO3. Proteolytically cleaved by caspase-3 during apoptosis at Asp-326 and Asp-349 resulting in a 37 kDa or a 39 kDa subunit respectively. The 39 kDa subunit is further cleaved into the 37 kDa form. Proteolytic cleavage results in kinase activation and nuclear translocation of the truncated form (MST1/N). It is less likely that cleavage at Asp-349 is a prerequisite for activation as this site is not conserved in the murine ortholog.

Its subcellular location is the cytoplasm. It localises to the nucleus. The enzyme catalyses L-seryl-[protein] + ATP = O-phospho-L-seryl-[protein] + ADP + H(+). It catalyses the reaction L-threonyl-[protein] + ATP = O-phospho-L-threonyl-[protein] + ADP + H(+). With respect to regulation, inhibited by the C-terminal non-catalytic region. Activated by caspase-cleavage. Full activation also requires homodimerization and autophosphorylation of Thr-183. Activated by RASSF1 which acts by preventing its dephosphorylation. Its function is as follows. Stress-activated, pro-apoptotic kinase which, following caspase-cleavage, enters the nucleus and induces chromatin condensation followed by internucleosomal DNA fragmentation. Key component of the Hippo signaling pathway which plays a pivotal role in organ size control and tumor suppression by restricting proliferation and promoting apoptosis. The core of this pathway is composed of a kinase cascade wherein STK3/MST2 and STK4/MST1, in complex with its regulatory protein SAV1, phosphorylates and activates LATS1/2 in complex with its regulatory protein MOB1, which in turn phosphorylates and inactivates YAP1 oncoprotein and WWTR1/TAZ. Phosphorylation of YAP1 by LATS2 inhibits its translocation into the nucleus to regulate cellular genes important for cell proliferation, cell death, and cell migration. STK3/MST2 and STK4/MST1 are required to repress proliferation of mature hepatocytes, to prevent activation of facultative adult liver stem cells (oval cells), and to inhibit tumor formation. Phosphorylates 'Ser-14' of histone H2B (H2BS14ph) during apoptosis. Phosphorylates FOXO3 upon oxidative stress, which results in its nuclear translocation and cell death initiation. Phosphorylates MOBKL1A, MOBKL1B and RASSF2. Phosphorylates TNNI3 (cardiac Tn-I) and alters its binding affinity to TNNC1 (cardiac Tn-C) and TNNT2 (cardiac Tn-T). Phosphorylates FOXO1 on 'Ser-212' and regulates its activation and stimulates transcription of PMAIP1 in a FOXO1-dependent manner. Phosphorylates SIRT1 and inhibits SIRT1-mediated p53/TP53 deacetylation, thereby promoting p53/TP53 dependent transcription and apoptosis upon DNA damage. Acts as an inhibitor of PKB/AKT1. Phosphorylates AR on 'Ser-650' and suppresses its activity by intersecting with PKB/AKT1 signaling and antagonizing formation of AR-chromatin complexes. The chain is Serine/threonine-protein kinase 4 (STK4) from Otolemur garnettii (Small-eared galago).